The following is a 312-amino-acid chain: HPr kinase/phosphorylase (312 aa).

Residues His139 and Lys160 contribute to the active site. 154-161 (GDSGIGKS) lines the ATP pocket. Residue Ser161 coordinates Mg(2+). The active-site Proton acceptor; for phosphorylation activity. Proton donor; for dephosphorylation activity is the Asp178. The segment at 202-211 (IEIRGVGIID) is important for the catalytic mechanism of both phosphorylation and dephosphorylation. Residue Glu203 coordinates Mg(2+). Arg244 is a catalytic residue. The important for the catalytic mechanism of dephosphorylation stretch occupies residues 265–270 (PVKTGR).

The protein belongs to the HPrK/P family. As to quaternary structure, homohexamer. Mg(2+) serves as cofactor.

The enzyme catalyses [HPr protein]-L-serine + ATP = [HPr protein]-O-phospho-L-serine + ADP + H(+). The catalysed reaction is [HPr protein]-O-phospho-L-serine + phosphate + H(+) = [HPr protein]-L-serine + diphosphate. Catalyzes the ATP- as well as the pyrophosphate-dependent phosphorylation of a specific serine residue in HPr, a phosphocarrier protein of the phosphoenolpyruvate-dependent sugar phosphotransferase system (PTS). HprK/P also catalyzes the pyrophosphate-producing, inorganic phosphate-dependent dephosphorylation (phosphorolysis) of seryl-phosphorylated HPr (P-Ser-HPr). The two antagonistic activities of HprK/P are regulated by several intracellular metabolites, which change their concentration in response to the absence or presence of rapidly metabolisable carbon sources (glucose, fructose, etc.) in the growth medium. Therefore, by controlling the phosphorylation state of HPr, HPrK/P is a sensor enzyme that plays a major role in the regulation of carbon metabolism and sugar transport: it mediates carbon catabolite repression (CCR), and regulates PTS-catalyzed carbohydrate uptake and inducer exclusion. This chain is HPr kinase/phosphorylase, found in Streptococcus pneumoniae serotype 4 (strain ATCC BAA-334 / TIGR4).